Consider the following 75-residue polypeptide: Small integral membrane protein 7-A (75 aa).

The first 17 residues, 1–17 (MIGDLLLFGTLLVNAGA), serve as a signal peptide directing secretion. The Extracellular portion of the chain corresponds to 18-53 (VLNFKLKKKESQGFGDDLTEATTGDNIREFLLSLRY). A helical transmembrane segment spans residues 54-74 (FRIFIALWNIFMMFCMIVLFG). A topological domain (cytoplasmic) is located at residue Ser75.

This sequence belongs to the SMIM7 family.

It localises to the membrane. The chain is Small integral membrane protein 7-A (smim7-a) from Xenopus laevis (African clawed frog).